The following is a 304-amino-acid chain: UDP-3-O-acyl-N-acetylglucosamine deacetylase (304 aa).

His-78, His-237, and Asp-241 together coordinate Zn(2+). Residue His-264 is the Proton donor of the active site.

It belongs to the LpxC family. The cofactor is Zn(2+).

The catalysed reaction is a UDP-3-O-[(3R)-3-hydroxyacyl]-N-acetyl-alpha-D-glucosamine + H2O = a UDP-3-O-[(3R)-3-hydroxyacyl]-alpha-D-glucosamine + acetate. It participates in glycolipid biosynthesis; lipid IV(A) biosynthesis; lipid IV(A) from (3R)-3-hydroxytetradecanoyl-[acyl-carrier-protein] and UDP-N-acetyl-alpha-D-glucosamine: step 2/6. In terms of biological role, catalyzes the hydrolysis of UDP-3-O-myristoyl-N-acetylglucosamine to form UDP-3-O-myristoylglucosamine and acetate, the committed step in lipid A biosynthesis. The sequence is that of UDP-3-O-acyl-N-acetylglucosamine deacetylase from Legionella pneumophila (strain Paris).